Here is an 882-residue protein sequence, read N- to C-terminus: Ion channel DMI1 (882 aa).

Residues 1 to 122 (MAKSNEESSN…PSSSSITKQQ (122 aa)) form a disordered region. Residues 48-62 (TSTTKTDFSEQQWNY) show a composition bias toward polar residues. A compositionally biased stretch (pro residues) spans 78 to 95 (PPPPPSKPPVNLIPPHPR). Low complexity predominate over residues 107–117 (SSLLPQPSSSS). The next 4 membrane-spanning stretches (helical) occupy residues 129–149 (SPIFYLLVICCIILVPYSAYL), 192–212 (TIALYIVLFTLILPFVLYKYL), 255–275 (LALLCATLFLIAFGGLALYAV), and 307–327 (IVSVSISAGGMLIFAMMLGLV). RCK N-terminal domains follow at residues 348 to 489 (RNHV…ETVV) and 608 to 757 (PEKI…DKSI). Residues 378-403 (VIVVLAEKEKEEMEMDIAKLEFDFMG) are a coiled coil.

Belongs to the castor/pollux (TC 1.A.1.23) family. Interacts (via c-terminus) with CNGC15A, CNGC15B and CNGC15C (via N-terminus). The Nod factor has no effect on these interactions, implying that the complex is maintained after activation. Mainly expressed in roots and nodules. Also detected in pods, flowers, leaves, and stems.

Its subcellular location is the nucleus membrane. Required for early signal transduction events leading to endosymbiosis. Acts early in a signal transduction chain leading from the perception of Nod factor to the activation of calcium spiking. Also involved in mycorrhizal symbiosis. May be involved in the regulation of the calcium channel responsible for calcium spiking by mobilizing another cation, and thereby altering the membrane potential. The protein is Ion channel DMI1 of Medicago truncatula (Barrel medic).